A 78-amino-acid chain; its full sequence is ATP synthase subunit a (78 aa).

3 helical membrane passes run 13-33 (LFGNVYAKEMLMILLVGLGTS), 35-55 (FLGAFGAFLPLIVWQAFGMFI), and 57-77 (SLQAFIFAMLAMVYMAHKVEA).

It belongs to the ATPase A chain family. In terms of assembly, F-type ATPases have 2 components, CF(1) - the catalytic core - and CF(0) - the membrane proton channel. CF(1) has five subunits: alpha(3), beta(3), gamma(1), delta(1), epsilon(1). CF(0) has three main subunits: a(1), b(2) and c(9-12). The alpha and beta chains form an alternating ring which encloses part of the gamma chain. CF(1) is attached to CF(0) by a central stalk formed by the gamma and epsilon chains, while a peripheral stalk is formed by the delta and b chains.

It localises to the cell membrane. In terms of biological role, key component of the proton channel; it plays a direct role in the translocation of protons across the membrane. This is ATP synthase subunit a (atpB) from Alkalihalobacillus alcalophilus (Bacillus alcalophilus).